The primary structure comprises 451 residues: Deoxyguanosinetriphosphate triphosphohydrolase-like protein (451 aa).

The region spanning Arg-61–Gly-274 is the HD domain.

This sequence belongs to the dGTPase family. Type 2 subfamily.

This is Deoxyguanosinetriphosphate triphosphohydrolase-like protein from Actinobacillus succinogenes (strain ATCC 55618 / DSM 22257 / CCUG 43843 / 130Z).